The chain runs to 439 residues: uncharacterized protein (439 aa).

Positions 268 to 284 (QQQQQQQPQHNNNNTQV) are enriched in low complexity. Residues 268 to 439 (QQQQQQQPQH…RTRFTTTNLH (172 aa)) form a disordered region. Pro residues predominate over residues 285-328 (QPPPPSQQLPPPPKPQPQLPKPQPQKPQPQLPKPPQQPKPPQEP). Positions 350 to 439 (QEQQQQPPQE…RTRFTTTNLH (90 aa)) are enriched in low complexity.

This is an uncharacterized protein from Dictyostelium discoideum (Social amoeba).